The primary structure comprises 547 residues: Glucose-6-phosphate isomerase (547 aa).

Glutamate 356 acts as the Proton donor in catalysis. Residues histidine 387 and lysine 508 contribute to the active site.

It belongs to the GPI family.

Its subcellular location is the cytoplasm. It catalyses the reaction alpha-D-glucose 6-phosphate = beta-D-fructose 6-phosphate. It functions in the pathway carbohydrate biosynthesis; gluconeogenesis. The protein operates within carbohydrate degradation; glycolysis; D-glyceraldehyde 3-phosphate and glycerone phosphate from D-glucose: step 2/4. Catalyzes the reversible isomerization of glucose-6-phosphate to fructose-6-phosphate. This chain is Glucose-6-phosphate isomerase, found in Cupriavidus taiwanensis (strain DSM 17343 / BCRC 17206 / CCUG 44338 / CIP 107171 / LMG 19424 / R1) (Ralstonia taiwanensis (strain LMG 19424)).